The following is a 422-amino-acid chain: Enolase (422 aa).

Residue glutamine 162 participates in (2R)-2-phosphoglycerate binding. Glutamate 204 serves as the catalytic Proton donor. 3 residues coordinate Mg(2+): aspartate 241, glutamate 284, and aspartate 311. (2R)-2-phosphoglycerate is bound by residues lysine 336, arginine 365, serine 366, and lysine 387. Lysine 336 serves as the catalytic Proton acceptor.

Belongs to the enolase family. Mg(2+) is required as a cofactor.

It is found in the cytoplasm. Its subcellular location is the secreted. It localises to the cell surface. The catalysed reaction is (2R)-2-phosphoglycerate = phosphoenolpyruvate + H2O. It participates in carbohydrate degradation; glycolysis; pyruvate from D-glyceraldehyde 3-phosphate: step 4/5. Its function is as follows. Catalyzes the reversible conversion of 2-phosphoglycerate (2-PG) into phosphoenolpyruvate (PEP). It is essential for the degradation of carbohydrates via glycolysis. This is Enolase from Thermus thermophilus (strain ATCC 27634 / DSM 579 / HB8).